An 874-amino-acid polypeptide reads, in one-letter code: Alanine--tRNA ligase (874 aa).

His562, His566, Cys664, and His668 together coordinate Zn(2+).

This sequence belongs to the class-II aminoacyl-tRNA synthetase family. It depends on Zn(2+) as a cofactor.

The protein localises to the cytoplasm. It catalyses the reaction tRNA(Ala) + L-alanine + ATP = L-alanyl-tRNA(Ala) + AMP + diphosphate. Functionally, catalyzes the attachment of alanine to tRNA(Ala) in a two-step reaction: alanine is first activated by ATP to form Ala-AMP and then transferred to the acceptor end of tRNA(Ala). Also edits incorrectly charged Ser-tRNA(Ala) and Gly-tRNA(Ala) via its editing domain. This chain is Alanine--tRNA ligase, found in Neisseria gonorrhoeae (strain ATCC 700825 / FA 1090).